Here is a 179-residue protein sequence, read N- to C-terminus: Large ribosomal subunit protein uL5 (179 aa).

The protein belongs to the universal ribosomal protein uL5 family. As to quaternary structure, part of the 50S ribosomal subunit; part of the 5S rRNA/L5/L18/L25 subcomplex. Contacts the 5S rRNA and the P site tRNA. Forms a bridge to the 30S subunit in the 70S ribosome.

Functionally, this is one of the proteins that bind and probably mediate the attachment of the 5S RNA into the large ribosomal subunit, where it forms part of the central protuberance. In the 70S ribosome it contacts protein S13 of the 30S subunit (bridge B1b), connecting the 2 subunits; this bridge is implicated in subunit movement. Contacts the P site tRNA; the 5S rRNA and some of its associated proteins might help stabilize positioning of ribosome-bound tRNAs. The sequence is that of Large ribosomal subunit protein uL5 from Acidovorax ebreus (strain TPSY) (Diaphorobacter sp. (strain TPSY)).